Consider the following 331-residue polypeptide: Ferredoxin--NADP reductase (331 aa).

Residues Glu34, Gln42, Tyr47, Val87, Phe120, Asp285, and Thr325 each coordinate FAD.

The protein belongs to the ferredoxin--NADP reductase type 2 family. Homodimer. FAD serves as cofactor.

The catalysed reaction is 2 reduced [2Fe-2S]-[ferredoxin] + NADP(+) + H(+) = 2 oxidized [2Fe-2S]-[ferredoxin] + NADPH. The polypeptide is Ferredoxin--NADP reductase (Levilactobacillus brevis (strain ATCC 367 / BCRC 12310 / CIP 105137 / JCM 1170 / LMG 11437 / NCIMB 947 / NCTC 947) (Lactobacillus brevis)).